The following is a 478-amino-acid chain: 3-isopropylmalate dehydratase large subunit (478 aa).

The [4Fe-4S] cluster site is built by cysteine 359, cysteine 417, and cysteine 420.

This sequence belongs to the aconitase/IPM isomerase family. LeuC type 1 subfamily. In terms of assembly, heterodimer of LeuC and LeuD. The cofactor is [4Fe-4S] cluster.

It catalyses the reaction (2R,3S)-3-isopropylmalate = (2S)-2-isopropylmalate. The protein operates within amino-acid biosynthesis; L-leucine biosynthesis; L-leucine from 3-methyl-2-oxobutanoate: step 2/4. Catalyzes the isomerization between 2-isopropylmalate and 3-isopropylmalate, via the formation of 2-isopropylmaleate. In Anaeromyxobacter sp. (strain Fw109-5), this protein is 3-isopropylmalate dehydratase large subunit.